Here is a 153-residue protein sequence, read N- to C-terminus: UPF0127 protein TGAM_1372 (153 aa).

Belongs to the UPF0127 family.

This is UPF0127 protein TGAM_1372 from Thermococcus gammatolerans (strain DSM 15229 / JCM 11827 / EJ3).